The chain runs to 196 residues: Large ribosomal subunit protein bL9c (196 aa).

Residues 1–41 constitute a chloroplast transit peptide; the sequence is MASTTSTLSLSWSNSFHSFAGAISEPQKSPENCRVMLPIVA.

In terms of assembly, component of the chloroplast large ribosomal subunit (LSU). Mature 70S chloroplast ribosomes of higher plants consist of a small (30S) and a large (50S) subunit. The 30S small subunit contains 1 molecule of ribosomal RNA (16S rRNA) and 24 different proteins. The 50S large subunit contains 3 rRNA molecules (23S, 5S and 4.5S rRNA) and 33 different proteins.

The protein resides in the plastid. Its subcellular location is the chloroplast. Its function is as follows. Component of the chloroplast ribosome (chloro-ribosome), a dedicated translation machinery responsible for the synthesis of chloroplast genome-encoded proteins, including proteins of the transcription and translation machinery and components of the photosynthetic apparatus. In Spinacia oleracea (Spinach), this protein is Large ribosomal subunit protein bL9c (RPL9).